A 382-amino-acid polypeptide reads, in one-letter code: Bifunctional enzyme IspD/IspF (382 aa).

Positions 1 to 225 (MTGKPSIAAL…AEERMAMISR (225 aa)) are 2-C-methyl-D-erythritol 4-phosphate cytidylyltransferase. Positions 225 to 382 (RTAMGFDVHG…AVATVRVPSI (158 aa)) are 2-C-methyl-D-erythritol 2,4-cyclodiphosphate synthase. A divalent metal cation contacts are provided by aspartate 231 and histidine 233. Residues 231-233 (DVH) and 257-258 (HS) each bind 4-CDP-2-C-methyl-D-erythritol 2-phosphate. Histidine 265 is an a divalent metal cation binding site. 4-CDP-2-C-methyl-D-erythritol 2-phosphate is bound by residues 279–281 (DIG), 355–358 (TTTE), phenylalanine 362, and arginine 365.

The protein in the N-terminal section; belongs to the IspD/TarI cytidylyltransferase family. IspD subfamily. In the C-terminal section; belongs to the IspF family. Requires a divalent metal cation as cofactor.

The catalysed reaction is 2-C-methyl-D-erythritol 4-phosphate + CTP + H(+) = 4-CDP-2-C-methyl-D-erythritol + diphosphate. The enzyme catalyses 4-CDP-2-C-methyl-D-erythritol 2-phosphate = 2-C-methyl-D-erythritol 2,4-cyclic diphosphate + CMP. Its pathway is isoprenoid biosynthesis; isopentenyl diphosphate biosynthesis via DXP pathway; isopentenyl diphosphate from 1-deoxy-D-xylulose 5-phosphate: step 2/6. The protein operates within isoprenoid biosynthesis; isopentenyl diphosphate biosynthesis via DXP pathway; isopentenyl diphosphate from 1-deoxy-D-xylulose 5-phosphate: step 4/6. Functionally, bifunctional enzyme that catalyzes the formation of 4-diphosphocytidyl-2-C-methyl-D-erythritol from CTP and 2-C-methyl-D-erythritol 4-phosphate (MEP) (IspD), and catalyzes the conversion of 4-diphosphocytidyl-2-C-methyl-D-erythritol 2-phosphate (CDP-ME2P) to 2-C-methyl-D-erythritol 2,4-cyclodiphosphate (ME-CPP) with a corresponding release of cytidine 5-monophosphate (CMP) (IspF). The polypeptide is Bifunctional enzyme IspD/IspF (Rhizorhabdus wittichii (strain DSM 6014 / CCUG 31198 / JCM 15750 / NBRC 105917 / EY 4224 / RW1) (Sphingomonas wittichii)).